A 300-amino-acid polypeptide reads, in one-letter code: Ribosomal RNA small subunit methyltransferase H (300 aa).

S-adenosyl-L-methionine is bound by residues 38 to 40 (GGH), Glu-55, Ile-85, Asp-102, and His-109.

Belongs to the methyltransferase superfamily. RsmH family.

Its subcellular location is the cytoplasm. The catalysed reaction is cytidine(1402) in 16S rRNA + S-adenosyl-L-methionine = N(4)-methylcytidine(1402) in 16S rRNA + S-adenosyl-L-homocysteine + H(+). In terms of biological role, specifically methylates the N4 position of cytidine in position 1402 (C1402) of 16S rRNA. The sequence is that of Ribosomal RNA small subunit methyltransferase H from Brachyspira hyodysenteriae (strain ATCC 49526 / WA1).